A 1805-amino-acid polypeptide reads, in one-letter code: Obscurin-like protein 1 (1805 aa).

Position 10 is a phosphoserine (Ser10). The Ig-like 1 domain maps to Pro12 to Thr100. Residues Phe17 to Arg19 are interaction with TTN. Cysteines 33 and 84 form a disulfide. The tract at residues Arg85–Tyr94 is interaction with TTN. The span at Pro104–Gly122 shows a compositional bias: pro residues. Positions Pro104–Leu131 are disordered. Ig-like domains are found at residues Pro128 to Gln225, Pro240 to Ser330, and Pro339 to Thr425. 3 disulfides stabilise this stretch: Cys149-Cys209, Cys267-Cys319, and Cys362-Cys412. The Fibronectin type-III domain maps to Pro517–Thr615. 10 Ig-like domains span residues Pro720 to Thr800, Pro804 to Thr891, Pro902 to Thr982, Pro986 to Thr1075, Pro1078 to Ser1165, Pro1176 to Gln1261, Pro1266 to His1351, Thr1355 to Ser1442, Pro1536 to Ser1628, and Pro1702 to Gln1798. Intrachain disulfides connect Cys738–Cys788, Cys829–Cys879, Cys920–Cys970, Cys1011–Cys1061, Cys1103–Cys1153, and Cys1195–Cys1245. Cys1558 and Cys1608 are disulfide-bonded.

As to quaternary structure, component of the 3M complex, composed of core components CUL7, CCDC8 and OBSL1. Interacts with CCDC8. Interacts with CUL7; the interaction is direct. Interacts with FBXW8. Interacts (via N-terminal Ig-like domain) with TTN/titin (via C-terminal Ig-like domain); the interaction is direct. Expressed in granule neurons, with levels decreasing with neuronal maturation.

The protein localises to the cytoplasm. It is found in the perinuclear region. Its subcellular location is the golgi apparatus. Core component of the 3M complex, a complex required to regulate microtubule dynamics and genome integrity. It is unclear how the 3M complex regulates microtubules, it could act by controlling the level of a microtubule stabilizer. Acts as a regulator of the Cul7-RING(FBXW8) ubiquitin-protein ligase, playing a critical role in the ubiquitin ligase pathway that regulates Golgi morphogenesis and dendrite patterning in brain. Required to localize CUL7 to the Golgi apparatus in neurons. This is Obscurin-like protein 1 (Obsl1) from Rattus norvegicus (Rat).